The chain runs to 441 residues: 3-phosphoshikimate 1-carboxyvinyltransferase (441 aa).

Residues Lys-26, Ser-27, and Arg-31 each coordinate 3-phosphoshikimate. Residue Lys-26 coordinates phosphoenolpyruvate. 2 residues coordinate phosphoenolpyruvate: Gly-99 and Arg-127. Ser-173, Ser-174, Gln-175, Ser-203, Asp-320, and Lys-347 together coordinate 3-phosphoshikimate. Residue Gln-175 participates in phosphoenolpyruvate binding. Catalysis depends on Asp-320, which acts as the Proton acceptor. 3 residues coordinate phosphoenolpyruvate: Arg-351, Arg-393, and Lys-423.

The protein belongs to the EPSP synthase family. In terms of assembly, monomer.

The protein localises to the cytoplasm. It carries out the reaction 3-phosphoshikimate + phosphoenolpyruvate = 5-O-(1-carboxyvinyl)-3-phosphoshikimate + phosphate. Its pathway is metabolic intermediate biosynthesis; chorismate biosynthesis; chorismate from D-erythrose 4-phosphate and phosphoenolpyruvate: step 6/7. Catalyzes the transfer of the enolpyruvyl moiety of phosphoenolpyruvate (PEP) to the 5-hydroxyl of shikimate-3-phosphate (S3P) to produce enolpyruvyl shikimate-3-phosphate and inorganic phosphate. The protein is 3-phosphoshikimate 1-carboxyvinyltransferase of Janthinobacterium sp. (strain Marseille) (Minibacterium massiliensis).